Consider the following 677-residue polypeptide: Fermitin family homolog 1 (677 aa).

An FERM domain is found at 96-653; the sequence is MLRLRLPNAK…HEYIGGYIFL (558 aa). The interval 157 to 181 is disordered; that stretch reads KEPVIEDILNLESSSTSSGSPVSPG. Low complexity predominate over residues 169-181; that stretch reads SSSTSSGSPVSPG. A phosphoserine mark is found at serine 170 and serine 179. The PH domain maps to 377–473; the sequence is KLFRPKKLML…WMAACILASK (97 aa).

It belongs to the kindlin family. Interacts with the cytoplasmic domain of integrins ITGB1 and ITGB3.

Its subcellular location is the cytoplasm. The protein resides in the cytoskeleton. It localises to the cell junction. The protein localises to the focal adhesion. It is found in the cell projection. Its subcellular location is the ruffle membrane. Functionally, involved in cell adhesion. Contributes to integrin activation. When coexpressed with talin, potentiates activation of ITGA2B. Required for normal keratinocyte proliferation. Required for normal polarization of basal keratinocytes in skin, and for normal cell shape. Required for normal adhesion of keratinocytes to fibronectin and laminin, and for normal keratinocyte migration to wound sites. This chain is Fermitin family homolog 1 (Fermt1), found in Mus musculus (Mouse).